The following is a 311-amino-acid chain: tRNA dimethylallyltransferase (311 aa).

Gly14–Thr21 contacts ATP. Residue Thr16–Thr21 coordinates substrate. Positions Asp39–Gln42 are interaction with substrate tRNA.

Belongs to the IPP transferase family. As to quaternary structure, monomer. Mg(2+) serves as cofactor.

The enzyme catalyses adenosine(37) in tRNA + dimethylallyl diphosphate = N(6)-dimethylallyladenosine(37) in tRNA + diphosphate. In terms of biological role, catalyzes the transfer of a dimethylallyl group onto the adenine at position 37 in tRNAs that read codons beginning with uridine, leading to the formation of N6-(dimethylallyl)adenosine (i(6)A). This is tRNA dimethylallyltransferase from Lactiplantibacillus plantarum (strain ATCC BAA-793 / NCIMB 8826 / WCFS1) (Lactobacillus plantarum).